The primary structure comprises 254 residues: Nickel import ATP-binding protein NikD (254 aa).

Residues 2–241 (PQQIELRNIA…PKHAVTRSLV (240 aa)) form the ABC transporter domain. Residue 36 to 43 (GGSGSGKS) coordinates ATP.

Belongs to the ABC transporter superfamily. Nickel importer (TC 3.A.1.5.3) family. As to quaternary structure, the complex is composed of two ATP-binding proteins (NikD and NikE), two transmembrane proteins (NikB and NikC) and a solute-binding protein (NikA).

The protein localises to the cell inner membrane. The catalysed reaction is Ni(2+)(out) + ATP + H2O = Ni(2+)(in) + ADP + phosphate + H(+). In terms of biological role, part of the ABC transporter complex NikABCDE involved in nickel import. Responsible for energy coupling to the transport system. In Escherichia coli O157:H7, this protein is Nickel import ATP-binding protein NikD.